The following is a 62-amino-acid chain: Large ribosomal subunit protein uL30 (62 aa).

It belongs to the universal ribosomal protein uL30 family. Part of the 50S ribosomal subunit.

The chain is Large ribosomal subunit protein uL30 from Geobacillus kaustophilus (strain HTA426).